The primary structure comprises 313 residues: tRNA dimethylallyltransferase (313 aa).

Position 9 to 16 (9 to 16 (GPTASGKT)) interacts with ATP. Position 11–16 (11–16 (TASGKT)) interacts with substrate. The tract at residues 34–37 (DSMQ) is interaction with substrate tRNA.

This sequence belongs to the IPP transferase family. As to quaternary structure, monomer. The cofactor is Mg(2+).

It carries out the reaction adenosine(37) in tRNA + dimethylallyl diphosphate = N(6)-dimethylallyladenosine(37) in tRNA + diphosphate. Catalyzes the transfer of a dimethylallyl group onto the adenine at position 37 in tRNAs that read codons beginning with uridine, leading to the formation of N6-(dimethylallyl)adenosine (i(6)A). The sequence is that of tRNA dimethylallyltransferase from Acetivibrio thermocellus (strain ATCC 27405 / DSM 1237 / JCM 9322 / NBRC 103400 / NCIMB 10682 / NRRL B-4536 / VPI 7372) (Clostridium thermocellum).